The primary structure comprises 326 residues: Probable GTP 3',8-cyclase (326 aa).

One can recognise a Radical SAM core domain in the interval 6 to 235; it reads LYGRPVLSLR…NRPRYIIRTQ (230 aa). Residue Arg15 participates in GTP binding. The [4Fe-4S] cluster site is built by Cys22, Cys26, and Cys29. Lys62 serves as a coordination point for GTP. Gly66 serves as a coordination point for S-adenosyl-L-methionine. GTP is bound at residue Thr92. Position 116 (Ser116) interacts with S-adenosyl-L-methionine. Lys153 contacts GTP. [4Fe-4S] cluster-binding residues include Cys253 and Cys256. 258 to 260 is a GTP binding site; it reads RLR. A [4Fe-4S] cluster-binding site is contributed by Cys270.

It belongs to the radical SAM superfamily. MoaA family. [4Fe-4S] cluster serves as cofactor.

The enzyme catalyses GTP + AH2 + S-adenosyl-L-methionine = (8S)-3',8-cyclo-7,8-dihydroguanosine 5'-triphosphate + 5'-deoxyadenosine + L-methionine + A + H(+). The protein operates within cofactor biosynthesis; molybdopterin biosynthesis. In terms of biological role, catalyzes the cyclization of GTP to (8S)-3',8-cyclo-7,8-dihydroguanosine 5'-triphosphate. This chain is Probable GTP 3',8-cyclase, found in Thermoplasma volcanium (strain ATCC 51530 / DSM 4299 / JCM 9571 / NBRC 15438 / GSS1).